The primary structure comprises 555 residues: Hydroxylamine reductase (555 aa).

Residues C3, C6, C18, and C25 each coordinate [4Fe-4S] cluster. Hybrid [4Fe-2O-2S] cluster is bound by residues H252, E276, C320, C407, C435, C460, E494, and K496. C407 is subject to Cysteine persulfide.

This sequence belongs to the HCP family. [4Fe-4S] cluster is required as a cofactor. Requires hybrid [4Fe-2O-2S] cluster as cofactor.

Its subcellular location is the cytoplasm. The enzyme catalyses A + NH4(+) + H2O = hydroxylamine + AH2 + H(+). Functionally, catalyzes the reduction of hydroxylamine to form NH(3) and H(2)O. The polypeptide is Hydroxylamine reductase (Burkholderia ambifaria (strain MC40-6)).